Here is a 328-residue protein sequence, read N- to C-terminus: Malate dehydrogenase (328 aa).

Position 12 to 18 (12 to 18 (GAAGQIA)) interacts with NAD(+). Substrate is bound by residues R93 and R99. NAD(+) contacts are provided by residues N106, Q113, and 130–132 (VGN). N132 and R163 together coordinate substrate. Residue H188 is the Proton acceptor of the active site.

It belongs to the LDH/MDH superfamily. MDH type 2 family.

It carries out the reaction (S)-malate + NAD(+) = oxaloacetate + NADH + H(+). In terms of biological role, catalyzes the reversible oxidation of malate to oxaloacetate. The sequence is that of Malate dehydrogenase from Burkholderia ambifaria (strain ATCC BAA-244 / DSM 16087 / CCUG 44356 / LMG 19182 / AMMD) (Burkholderia cepacia (strain AMMD)).